Consider the following 267-residue polypeptide: Probable ribose-5-phosphate isomerase 1 (267 aa).

Position 2 is an N-acetylglycine (Gly2). Ser92 is subject to Phosphoserine.

It belongs to the ribose 5-phosphate isomerase family. In terms of tissue distribution, expressed in roots, cotyledons, leaves and flowers.

The protein resides in the cytoplasm. It catalyses the reaction aldehydo-D-ribose 5-phosphate = D-ribulose 5-phosphate. It participates in carbohydrate degradation; pentose phosphate pathway; D-ribose 5-phosphate from D-ribulose 5-phosphate (non-oxidative stage): step 1/1. Functionally, catalyzes the reversible conversion of ribose-5-phosphate to ribulose 5-phosphate. This chain is Probable ribose-5-phosphate isomerase 1 (RPI1), found in Arabidopsis thaliana (Mouse-ear cress).